The primary structure comprises 364 residues: Histidinol-phosphate aminotransferase BQ2027_MB2256C (364 aa).

Lys-220 carries the N6-(pyridoxal phosphate)lysine modification.

This sequence belongs to the class-I pyridoxal-phosphate-dependent aminotransferase family. In terms of assembly, monomer. It depends on pyridoxal 5'-phosphate as a cofactor.

Its subcellular location is the secreted. It is found in the cell wall. It catalyses the reaction L-histidinol phosphate + 2-oxoglutarate = 3-(imidazol-4-yl)-2-oxopropyl phosphate + L-glutamate. Aminotransferase that catalyzes the conversion of histidinol phosphate and 2-oxoglutarate into L-glutamate and imidazole acetol phosphate. Might play a significant role in mediating histidine biosynthesis during infection. Facilitates mycobacterial survival and virulence in macrophages. The polypeptide is Histidinol-phosphate aminotransferase BQ2027_MB2256C (Mycobacterium bovis (strain ATCC BAA-935 / AF2122/97)).